The primary structure comprises 153 residues: Selenoprotein F (153 aa).

Positions 1-19 (MAGEVYLLWLLPLLQGLAS) are cleaved as a signal peptide. Residue Sec84 is a non-standard amino acid, selenocysteine.

This sequence belongs to the selenoprotein M/F family. Higher levels in polster, prechordal plate, axis, otic vesicle and somites. Lower levels in fin buds.

The protein localises to the endoplasmic reticulum lumen. May be involved in redox reactions associated with the formation of disulfide bonds. May contribute to the quality control of protein folding in the endoplasmic reticulum. This chain is Selenoprotein F, found in Danio rerio (Zebrafish).